A 197-amino-acid polypeptide reads, in one-letter code: Ribosome maturation factor RimM (197 aa).

A PRC barrel domain is found at Asp92–Leu164. Positions Ile167–Ala197 are disordered. The segment covering Ser176–Ala186 has biased composition (low complexity). The segment covering Glu187–Ala197 has biased composition (basic and acidic residues).

It belongs to the RimM family. As to quaternary structure, binds ribosomal protein uS19.

The protein localises to the cytoplasm. Functionally, an accessory protein needed during the final step in the assembly of 30S ribosomal subunit, possibly for assembly of the head region. Essential for efficient processing of 16S rRNA. May be needed both before and after RbfA during the maturation of 16S rRNA. It has affinity for free ribosomal 30S subunits but not for 70S ribosomes. This chain is Ribosome maturation factor RimM, found in Arthrobacter sp. (strain FB24).